A 192-amino-acid polypeptide reads, in one-letter code: Xanthine phosphoribosyltransferase (192 aa).

Xanthine contacts are provided by leucine 20 and asparagine 27. 128-132 (ANGQA) is a binding site for 5-phospho-alpha-D-ribose 1-diphosphate. A xanthine-binding site is contributed by lysine 156.

This sequence belongs to the purine/pyrimidine phosphoribosyltransferase family. Xpt subfamily. In terms of assembly, homodimer.

It localises to the cytoplasm. It catalyses the reaction XMP + diphosphate = xanthine + 5-phospho-alpha-D-ribose 1-diphosphate. It functions in the pathway purine metabolism; XMP biosynthesis via salvage pathway; XMP from xanthine: step 1/1. Functionally, converts the preformed base xanthine, a product of nucleic acid breakdown, to xanthosine 5'-monophosphate (XMP), so it can be reused for RNA or DNA synthesis. The sequence is that of Xanthine phosphoribosyltransferase from Lacticaseibacillus casei (strain BL23) (Lactobacillus casei).